The following is a 341-amino-acid chain: HTH-type transcriptional repressor PurR (341 aa).

The HTH lacI-type domain maps to 2–56; the sequence is ATIKDVAKRANVSTTTVSHVINKTRFVSEETRNAVWAAIKELHYSPSAVARSLKV. Residues 4-23 constitute a DNA-binding region (H-T-H motif); the sequence is IKDVAKRANVSTTTVSHVIN. Residues 48 to 56 mediate DNA binding; sequence SAVARSLKV. Residues Tyr-73, Arg-190, Thr-192, Phe-221, and Asp-275 each contribute to the hypoxanthine site.

As to quaternary structure, homodimer.

It functions in the pathway purine metabolism; purine nucleotide biosynthesis [regulation]. Functionally, is the main repressor of the genes involved in the de novo synthesis of purine nucleotides, regulating purB, purC, purEK, purF, purHD, purL, purMN and guaBA expression. PurR is allosterically activated to bind its cognate DNA by binding the purine corepressors, hypoxanthine or guanine, thereby effecting transcription repression. In Escherichia coli O139:H28 (strain E24377A / ETEC), this protein is HTH-type transcriptional repressor PurR.